We begin with the raw amino-acid sequence, 295 residues long: GTPase Era (295 aa).

The Era-type G domain occupies 7-176; the sequence is KTISVCIIGR…IKSKAKVSPW (170 aa). Positions 15–22 are G1; sequence GRPNSGKS. 15–22 is a binding site for GTP; sequence GRPNSGKS. The G2 stretch occupies residues 41–45; that stretch reads QTTRS. The segment at 62–65 is G3; it reads DTPG. GTP contacts are provided by residues 62-66 and 124-127; these read DTPGI and NKID. Residues 124 to 127 are G4; sequence NKID. A G5 region spans residues 152-154; the sequence is ISA. In terms of domain architecture, KH type-2 spans 204-281; it reads LQQELPYKLT…HLFLFVKVHA (78 aa).

The protein belongs to the TRAFAC class TrmE-Era-EngA-EngB-Septin-like GTPase superfamily. Era GTPase family. In terms of assembly, monomer.

The protein localises to the cytoplasm. It localises to the cell inner membrane. An essential GTPase that binds both GDP and GTP, with rapid nucleotide exchange. Plays a role in 16S rRNA processing and 30S ribosomal subunit biogenesis and possibly also in cell cycle regulation and energy metabolism. This chain is GTPase Era, found in Rickettsia prowazekii (strain Madrid E).